The sequence spans 312 residues: Non-structural protein 12A (312 aa).

The span at 1–23 (MFKSGSGSLKRSGSISSVKSFSG) shows a compositional bias: low complexity. Disordered stretches follow at residues 1–37 (MFKS…RGSV), 63–97 (VPEK…YNQN), and 114–162 (KGRG…TGDG). Basic and acidic residues predominate over residues 63–73 (VPEKTKSEGNL). A compositionally biased stretch (polar residues) spans 74–97 (KNKSSVITGNFESSGPTNAHYNQN). The segment covering 122–134 (DARHTATDSRLSQ) has biased composition (basic and acidic residues).

The protein belongs to the phytoreovirus non-structural protein Pns12A family.

The protein resides in the host cytoplasm. Constituent of viral factories. This Rice dwarf virus (isolate Fujian) (RDV) protein is Non-structural protein 12A.